Here is a 205-residue protein sequence, read N- to C-terminus: Imidazoleglycerol-phosphate dehydratase (205 aa).

Positions 1-27 (MKQASPRAGGAKARRGQVARKTKETDV) are disordered.

This sequence belongs to the imidazoleglycerol-phosphate dehydratase family.

It localises to the cytoplasm. It catalyses the reaction D-erythro-1-(imidazol-4-yl)glycerol 3-phosphate = 3-(imidazol-4-yl)-2-oxopropyl phosphate + H2O. It functions in the pathway amino-acid biosynthesis; L-histidine biosynthesis; L-histidine from 5-phospho-alpha-D-ribose 1-diphosphate: step 6/9. The sequence is that of Imidazoleglycerol-phosphate dehydratase from Anaeromyxobacter sp. (strain Fw109-5).